Reading from the N-terminus, the 389-residue chain is tRNA-specific 2-thiouridylase MnmA (389 aa).

ATP contacts are provided by residues 34–41 and Leu60; that span reads AMSGGVDS. Cys128 serves as the catalytic Nucleophile. An intrachain disulfide couples Cys128 to Cys225. ATP is bound at residue Gly152. Residues 174 to 176 form an interaction with tRNA region; that stretch reads RDQ. Cys225 acts as the Cysteine persulfide intermediate in catalysis.

It belongs to the MnmA/TRMU family.

The protein localises to the cytoplasm. The enzyme catalyses S-sulfanyl-L-cysteinyl-[protein] + uridine(34) in tRNA + AH2 + ATP = 2-thiouridine(34) in tRNA + L-cysteinyl-[protein] + A + AMP + diphosphate + H(+). Its function is as follows. Catalyzes the 2-thiolation of uridine at the wobble position (U34) of tRNA, leading to the formation of s(2)U34. This Paracoccus denitrificans (strain Pd 1222) protein is tRNA-specific 2-thiouridylase MnmA.